Here is a 354-residue protein sequence, read N- to C-terminus: Dual-specificity RNA methyltransferase RlmN (354 aa).

Glu-86 serves as the catalytic Proton acceptor. Positions 105–338 (RHARYTICVS…CTIRQSKGLD (234 aa)) constitute a Radical SAM core domain. Residues Cys-112 and Cys-343 are joined by a disulfide bond. [4Fe-4S] cluster contacts are provided by Cys-119, Cys-123, and Cys-126. Residues 169 to 170 (GE), Ser-201, 224 to 226 (SLH), and Asn-300 contribute to the S-adenosyl-L-methionine site. Cys-343 serves as the catalytic S-methylcysteine intermediate.

This sequence belongs to the radical SAM superfamily. RlmN family. [4Fe-4S] cluster serves as cofactor.

It localises to the cytoplasm. The enzyme catalyses adenosine(2503) in 23S rRNA + 2 reduced [2Fe-2S]-[ferredoxin] + 2 S-adenosyl-L-methionine = 2-methyladenosine(2503) in 23S rRNA + 5'-deoxyadenosine + L-methionine + 2 oxidized [2Fe-2S]-[ferredoxin] + S-adenosyl-L-homocysteine. The catalysed reaction is adenosine(37) in tRNA + 2 reduced [2Fe-2S]-[ferredoxin] + 2 S-adenosyl-L-methionine = 2-methyladenosine(37) in tRNA + 5'-deoxyadenosine + L-methionine + 2 oxidized [2Fe-2S]-[ferredoxin] + S-adenosyl-L-homocysteine. In terms of biological role, specifically methylates position 2 of adenine 2503 in 23S rRNA and position 2 of adenine 37 in tRNAs. m2A2503 modification seems to play a crucial role in the proofreading step occurring at the peptidyl transferase center and thus would serve to optimize ribosomal fidelity. The polypeptide is Dual-specificity RNA methyltransferase RlmN (Campylobacter fetus subsp. fetus (strain 82-40)).